The chain runs to 695 residues: Elongation factor G (695 aa).

The tr-type G domain occupies 9–283 (EKIRNIGIVA…AVIDYLPSPL (275 aa)). GTP-binding positions include 18-25 (AHIDAGKT), 82-86 (DTPGH), and 136-139 (NKMD).

The protein belongs to the TRAFAC class translation factor GTPase superfamily. Classic translation factor GTPase family. EF-G/EF-2 subfamily.

The protein resides in the cytoplasm. In terms of biological role, catalyzes the GTP-dependent ribosomal translocation step during translation elongation. During this step, the ribosome changes from the pre-translocational (PRE) to the post-translocational (POST) state as the newly formed A-site-bound peptidyl-tRNA and P-site-bound deacylated tRNA move to the P and E sites, respectively. Catalyzes the coordinated movement of the two tRNA molecules, the mRNA and conformational changes in the ribosome. This chain is Elongation factor G, found in Petrotoga mobilis (strain DSM 10674 / SJ95).